A 570-amino-acid chain; its full sequence is MGFLQLLVVAVLASEHRVAGAAEVFGNSSEGLIEFSVGKFRYFELNRPFPEEAILHDISSNVTFLIFQIHSQYQNTTVSFSPTLLSNSSETGTASGLVFILRPEQSTCTWYLGTSGIQPVQNMAILLSYSERDPVPGGCNLEFDLDIDPNIYLEYNFFETTIKFAPANLGYARGVDPPPCDAGTDQDSRWRLQYDVYQYFLPENDLTEEMLLKHLQRMVSVPQVKASALKVVTLTANDKTSVSFSSLPGQGVIYNVIVWDPFLNTSAAYIPAHTYACSFEAGEGSCASLGRVSSKVFFTLFALLGFFICFFGHRFWKTELFFIGFIIMGFFFYILITRLTPIKYDVNLILTAVTGSVGGMFLVAVWWRFGILSICMLCVGLVLGFLISSVTFFTPLGNLKIFHDDGVFWVTFSCIAILIPVVFMGCLRILNILTCGVIGSYSVVLAIDSYWSTSLSYITLNVLKRALNKDFHRAFTNVPFQTNDFIILAVWGMLAVSGITLQIRRERGRPFFPPHPYKLWKQERERRVTNILDPSYHIPPLRERLYGRLTQIKGLFQKEQPAGERTPLLL.

The N-terminal stretch at 1-21 (MGFLQLLVVAVLASEHRVAGA) is a signal peptide. Residues Asn27, Asn61, Asn75, Asn87, and Asn264 are each glycosylated (N-linked (GlcNAc...) asparagine). The next 7 helical transmembrane spans lie at 296-313 (VFFTLFALLGFFICFFGH), 320-342 (LFFIGFIIMGFFFYILITRLTPI), 347-369 (NLILTAVTGSVGGMFLVAVWWRF), 371-393 (ILSICMLCVGLVLGFLISSVTFF), 408-430 (FWVTFSCIAILIPVVFMGCLRIL), 437-459 (VIGSYSVVLAIDSYWSTSLSYIT), and 479-501 (PFQTNDFIILAVWGMLAVSGITL).

In terms of tissue distribution, widely expressed. Highly expressed in kidney and pancreas.

The protein localises to the cell membrane. In terms of biological role, involved in the inhibition of cytokine-induced death of pancreatic beta cells. Involved in the promotion of insulin secretion from pancreatic beta cells. Is a downstream transcriptional target of p53/TP53, and acts as a pro-survival homeostatic factor that attenuates the development of cellular stress. Maintains protein homeostasis and promotes cell survival through attenuation of endoplasmic reticulum (ER) stress and the subsequent induction of unfolded protein response (UPR). This chain is Transmembrane 7 superfamily member 3 (TM7SF3), found in Homo sapiens (Human).